The sequence spans 1377 residues: Temperature-sensitive hemagglutinin tsh autotransporter (1377 aa).

An N-terminal signal peptide occupies residues 1–52 (MNRIYSLRYSAVARGFIAVSEFARKCVHKSVRRLCFPVLLLIPVLFSAGSLA). The region spanning 53–302 (GTVNNELGYQ…AVIPLDFIGQ (250 aa)) is the Peptidase S6 domain. Active-site charge relay system residues include His-125, Asp-153, and Ser-259. One can recognise an Autotransporter domain in the interval 1111–1377 (DINGEAGTWV…AINANIRYSF (267 aa)).

The C-terminus is blocked. Post-translationally, cleaved to release the mature protein from the outer membrane.

Its subcellular location is the periplasm. It localises to the secreted. The protein localises to the cell surface. The protein resides in the cell outer membrane. Contributes to the development of lesions and deposition of fibrin in the avian air sacs. It can act both as an adhesin and as a serine protease. Agglutinates erythrocytes while in contact with the extracellular surface of the bacterial cells. Can adhere to purified hemoglobin and bind with great efficiency to extracellular matrix proteins. Cleaves casein and exhibits mucinolytic activity. This chain is Temperature-sensitive hemagglutinin tsh autotransporter (tsh), found in Escherichia coli.